The following is a 468-amino-acid chain: Fibrinogen beta chain (468 aa).

Glutamine 1 is modified (pyrrolidone carboxylic acid). Residues glutamine 1–glutamine 10 are compositionally biased toward acidic residues. Positions glutamine 1–threonine 54 are disordered. Threonine 4 is a glycosylation site (O-linked (GalNAc...) threonine). A Sulfotyrosine modification is found at tyrosine 6. Positions arginine 24–proline 34 are enriched in basic and acidic residues. Residues lysine 88–cysteine 204 are a coiled coil. Disulfide bonds link cysteine 208/cysteine 293 and cysteine 218/cysteine 247. The 257-residue stretch at asparagine 209–phenylalanine 465 folds into the Fibrinogen C-terminal domain. A glycan (N-linked (GlcNAc...) asparagine) is linked at asparagine 371. A disulfide bridge connects residues cysteine 401 and cysteine 414.

Heterohexamer; disulfide linked. Contains 2 sets of 3 non-identical chains (alpha, beta and gamma). The 2 heterotrimers are in head to head conformation with the N-termini in a small central domain. In terms of processing, conversion of fibrinogen to fibrin is triggered by thrombin, which cleaves fibrinopeptides A and B from alpha and beta chains, and thus exposes the N-terminal polymerization sites responsible for the formation of the soft clot. The soft clot is converted into the hard clot by factor XIIIA which catalyzes the epsilon-(gamma-glutamyl)lysine cross-linking between gamma chains (stronger) and between alpha chains (weaker) of different monomers. In terms of tissue distribution, detected in blood plasma (at protein level).

The protein resides in the secreted. Functionally, cleaved by the protease thrombin to yield monomers which, together with fibrinogen alpha (FGA) and fibrinogen gamma (FGG), polymerize to form an insoluble fibrin matrix. Fibrin has a major function in hemostasis as one of the primary components of blood clots. In addition, functions during the early stages of wound repair to stabilize the lesion and guide cell migration during re-epithelialization. Was originally thought to be essential for platelet aggregation, based on in vitro studies using anticoagulated blood. However subsequent studies have shown that it is not absolutely required for thrombus formation in vivo. Enhances expression of SELP in activated platelets. Maternal fibrinogen is essential for successful pregnancy. Fibrin deposition is also associated with infection, where it protects against IFNG-mediated hemorrhage. May also facilitate the antibacterial immune response via both innate and T-cell mediated pathways. The chain is Fibrinogen beta chain (FGB) from Bos taurus (Bovine).